A 361-amino-acid chain; its full sequence is Protein SGT1 homolog (361 aa).

3 TPR repeats span residues 3-36, 37-70, and 71-104; these read ASDL…GPAT, ADLY…DPTM, and HKAY…APGD. T150 carries the phosphothreonine modification. One can recognise a CS domain in the interval 159 to 248; it reads KPKYRHDYYN…AEQVTWTTLD (90 aa). The tract at residues 255–295 is disordered; that stretch reads AIPQKISTPAETAPRPSYPSSKSKKDWDKLEAEVKKEEKEE. Position 262 is a phosphothreonine (T262). In terms of domain architecture, SGS spans 271–361; that stretch reads SYPSSKSKKD…DGMELKKWEI (91 aa). The segment covering 277 to 295 has biased composition (basic and acidic residues); the sequence is SKKDWDKLEAEVKKEEKEE.

Belongs to the SGT1 family. Constitutively phosphorylated at Thr-262 and phosphorylated at Thr-150 upon infection with the fungal pathogen Ustilago maydis.

The protein localises to the cytoplasm. It localises to the nucleus. Its function is as follows. May act as positive regulator of basal defense. May be involved in basal disease resistance to the fungal pathogen Ustilago maydis. This Zea mays (Maize) protein is Protein SGT1 homolog.